Reading from the N-terminus, the 314-residue chain is Small ribosomal subunit biogenesis GTPase RsgA (314 aa).

The interval 1–20 (MKRAPTKQPAKPAARGGERA) is disordered. The region spanning 85–246 (SDQFKSKLFA…LIDSPGFQEF (162 aa)) is the CP-type G domain. GTP-binding positions include 134–137 (NKID) and 188–196 (GQSGMGKST). Zn(2+) is bound by residues Cys270, Cys275, His277, and Cys283.

It belongs to the TRAFAC class YlqF/YawG GTPase family. RsgA subfamily. As to quaternary structure, monomer. Associates with 30S ribosomal subunit, binds 16S rRNA. Requires Zn(2+) as cofactor.

It is found in the cytoplasm. Functionally, one of several proteins that assist in the late maturation steps of the functional core of the 30S ribosomal subunit. Helps release RbfA from mature subunits. May play a role in the assembly of ribosomal proteins into the subunit. Circularly permuted GTPase that catalyzes slow GTP hydrolysis, GTPase activity is stimulated by the 30S ribosomal subunit. The chain is Small ribosomal subunit biogenesis GTPase RsgA from Burkholderia pseudomallei (strain K96243).